The following is a 284-amino-acid chain: 4-hydroxy-3-methylbut-2-enyl diphosphate reductase (284 aa).

C12 lines the [4Fe-4S] cluster pocket. The (2E)-4-hydroxy-3-methylbut-2-enyl diphosphate site is built by H40 and H72. 2 residues coordinate dimethylallyl diphosphate: H40 and H72. Residues H40 and H72 each coordinate isopentenyl diphosphate. C94 contacts [4Fe-4S] cluster. H122 serves as a coordination point for (2E)-4-hydroxy-3-methylbut-2-enyl diphosphate. Residue H122 coordinates dimethylallyl diphosphate. H122 is an isopentenyl diphosphate binding site. Residue E124 is the Proton donor of the active site. (2E)-4-hydroxy-3-methylbut-2-enyl diphosphate is bound at residue T161. C193 contacts [4Fe-4S] cluster. 3 residues coordinate (2E)-4-hydroxy-3-methylbut-2-enyl diphosphate: S221, N223, and S264. Dimethylallyl diphosphate-binding residues include S221, N223, and S264. Residues S221, N223, and S264 each contribute to the isopentenyl diphosphate site.

The protein belongs to the IspH family. The cofactor is [4Fe-4S] cluster.

The catalysed reaction is isopentenyl diphosphate + 2 oxidized [2Fe-2S]-[ferredoxin] + H2O = (2E)-4-hydroxy-3-methylbut-2-enyl diphosphate + 2 reduced [2Fe-2S]-[ferredoxin] + 2 H(+). It catalyses the reaction dimethylallyl diphosphate + 2 oxidized [2Fe-2S]-[ferredoxin] + H2O = (2E)-4-hydroxy-3-methylbut-2-enyl diphosphate + 2 reduced [2Fe-2S]-[ferredoxin] + 2 H(+). Its pathway is isoprenoid biosynthesis; dimethylallyl diphosphate biosynthesis; dimethylallyl diphosphate from (2E)-4-hydroxy-3-methylbutenyl diphosphate: step 1/1. It functions in the pathway isoprenoid biosynthesis; isopentenyl diphosphate biosynthesis via DXP pathway; isopentenyl diphosphate from 1-deoxy-D-xylulose 5-phosphate: step 6/6. In terms of biological role, catalyzes the conversion of 1-hydroxy-2-methyl-2-(E)-butenyl 4-diphosphate (HMBPP) into a mixture of isopentenyl diphosphate (IPP) and dimethylallyl diphosphate (DMAPP). Acts in the terminal step of the DOXP/MEP pathway for isoprenoid precursor biosynthesis. This is 4-hydroxy-3-methylbut-2-enyl diphosphate reductase from Dehalococcoides mccartyi (strain CBDB1).